We begin with the raw amino-acid sequence, 590 residues long: Protein NRT1/ PTR FAMILY 6.3 (590 aa).

2 helical membrane-spanning segments follow: residues 46-66 and 77-97; these read LTTL…MHLG and FLGT…TFLG. The residue at position 101 (T101) is a Phosphothreonine; by CIPK23. 10 consecutive transmembrane segments (helical) span residues 102-122, 143-163, 193-213, 219-239, 342-362, 374-394, 423-443, 460-480, 501-521, and 542-562; these read IAIF…STII, GIQL…TGGV, FFFC…YVQD, WGYG…LAGT, MLPI…LTTL, IGSF…GLLL, IGLG…VELK, LGFY…ALIY, GLLL…VTIV, and YNFY…FLVF. The substrate site is built by H356 and T360.

The protein belongs to the major facilitator superfamily. Proton-dependent oligopeptide transporter (POT/PTR) (TC 2.A.17) family. Monomer and homodimer. The dimer has the 2 monomers in the same orientation. Interacts with CIPK23. In terms of processing, acts as a high-affinity nitrate transporter when phosphorylated and as a low-affinity transporter when dephosphorylated. Forms homodimer when unphosphorylated and monomer when phosphorylated. Low nitrogen concentration in the medium stimulates phosphorylation. Phosphorylation also regulates the nitrate signaling. Expressed in the stele in lateral root primordia before emergence and in the tip of primary and emerged lateral roots. Detected in emerging and immature leaves, guard cells, flower buds, style, stigma, anthers and pollen grains. Not detected in the shoot apical meristem.

It localises to the membrane. Dual affinity nitrate transporter. Involved in proton-dependent nitrate uptake and in the regulation of the nitrate transporter NRT2.1. Also acts as a nitrate sensor that trigger a specific signaling pathway stimulating lateral root growth and seed germination. The uptake activity is not required for sensor function. Displays an auxin transport facilitation inhibited by high nitrate concentration. Required to prevent auxin accumulation in preemerged lateral root primordia and young lateral roots when external nitrate concentration is low or null. May be involved in the basipetal transport of auxin out of the lateral root tips. Acts as a bidirectional transporter involved in root-to-shoot nitrate translocation. Recognizes specifically nitrate and chlorate, but not nitrite, alanine, sulfate, phosphate or the di-peptide Ala-Ala. The sequence is that of Protein NRT1/ PTR FAMILY 6.3 (NPF6.3) from Arabidopsis thaliana (Mouse-ear cress).